The primary structure comprises 205 residues: Small heat shock protein hspG12 (205 aa).

A sHSP domain is found at Lys-35–Asn-205. The disordered stretch occupies residues Pro-99–Glu-147. Residues Ala-109–Asp-118 are compositionally biased toward acidic residues. Positions Lys-134–Glu-147 are enriched in basic and acidic residues.

It belongs to the small heat shock protein (HSP20) family.

The sequence is that of Small heat shock protein hspG12 (hspG12) from Dictyostelium discoideum (Social amoeba).